The chain runs to 429 residues: Adenylosuccinate synthetase (429 aa).

Residues 12 to 18 (GDEGKGK) and 40 to 42 (GHT) contribute to the GTP site. Asp13 acts as the Proton acceptor in catalysis. Residues Asp13 and Gly40 each contribute to the Mg(2+) site. Residues 13–16 (DEGK), 38–41 (NAGH), Thr128, Arg142, Gln223, Thr238, and Arg302 each bind IMP. His41 (proton donor) is an active-site residue. A substrate-binding site is contributed by 298-304 (TTTGRPR). GTP is bound by residues Arg304, 330–332 (CID), and 412–414 (SVG).

This sequence belongs to the adenylosuccinate synthetase family. As to quaternary structure, homodimer. Mg(2+) serves as cofactor.

Its subcellular location is the cytoplasm. It carries out the reaction IMP + L-aspartate + GTP = N(6)-(1,2-dicarboxyethyl)-AMP + GDP + phosphate + 2 H(+). It participates in purine metabolism; AMP biosynthesis via de novo pathway; AMP from IMP: step 1/2. In terms of biological role, plays an important role in the de novo pathway of purine nucleotide biosynthesis. Catalyzes the first committed step in the biosynthesis of AMP from IMP. This chain is Adenylosuccinate synthetase, found in Streptococcus mutans serotype c (strain ATCC 700610 / UA159).